Consider the following 318-residue polypeptide: Protease HtpX homolog (318 aa).

The next 3 helical transmembrane spans lie at 1 to 21 (MLEA…VGRL), 35 to 55 (ILGL…GSAI), and 56 to 76 (AGLV…SRIV). His-167 is a Zn(2+) binding site. Residue Glu-168 is part of the active site. His-171 serves as a coordination point for Zn(2+). Helical transmembrane passes span 178–198 (LVMT…DPWL) and 209–229 (IAFL…LVAA). Zn(2+) is bound at residue Glu-235.

It belongs to the peptidase M48B family. Requires Zn(2+) as cofactor.

It localises to the cell membrane. In Methanopyrus kandleri (strain AV19 / DSM 6324 / JCM 9639 / NBRC 100938), this protein is Protease HtpX homolog.